The following is a 1040-amino-acid chain: Exosome RNA helicase MTR4 (1040 aa).

Residue alanine 2 is modified to N-acetylalanine. The tract at residues 16–77 (DSTSAAGAKK…GTDEPIFGKK (62 aa)) is disordered. The span at 23–33 (AKKDKEKEKWK) shows a compositional bias: basic and acidic residues. A Glycyl lysine isopeptide (Lys-Gly) (interchain with G-Cter in SUMO2) cross-link involves residue lysine 24. At serine 38 the chain carries Phosphoserine. Over residues 41–50 (KAGKRLDTKL) the composition is skewed to basic and acidic residues. N6-acetyllysine occurs at positions 49 and 76. ATP is bound by residues isoleucine 137, 159–166 (AHTSAGKT), serine 162, glycine 164, lysine 165, and threonine 166. Residues 146–302 (IQCVDNNQSV…WICHLHKQPC (157 aa)) form the Helicase ATP-binding domain. The short motif at 250–253 (DEIH) is the DEIH box element. Lysine 356 is covalently cross-linked (Glycyl lysine isopeptide (Lys-Gly) (interchain with G-Cter in SUMO2)). A Helicase C-terminal domain is found at 403 to 575 (QMTKLDFNTD…NMVLNLLRVE (173 aa)). Glycyl lysine isopeptide (Lys-Gly) (interchain with G-Cter in SUMO2) cross-links involve residues lysine 682 and lysine 721.

The protein belongs to the helicase family. SKI2 subfamily. Component of a TRAMP-like complex, an ATP-dependent exosome regulatory complex consisting of a helicase (MTREX), an oligadenylate polymerase (TENT4B or TENT4A), and a substrate specific RNA-binding factor (ZCCHC7 or ZCCHC8). Several TRAMP-like complexes exist with specific compositions and are associated with nuclear, or nucleolar RNA exosomes. Identified in the spliceosome C complex. Component of the poly(A) tail exosome targeting (PAXT) complex made of PABPN1, ZFC3H1 and MTREX that directs a subset of long and polyadenylated poly(A) RNAs for exosomal degradation. Component of the nuclear exosome targeting (NEXT) complex composed of MTREX, ZCCHC8, and RBM7 that directs a subset of non-coding short-lived RNAs for exosomal degradation. Interacts with ZCCHC8; this interaction bridges the interaction between RBM7 and MTREX. Binds to ZFC3H1 and RBM7 in a RNase-insensitive manner. Interacts with EXOSC10; the interaction mediates the association of MTREX with nuclear RNA exosomes. Interacts with isoform 1 of NVL in an ATP-dependent manner; the interaction is required to associate NVL with nuclear RNA exosome. Interacts with WDR74; the interaction dissociation in a late stage of rRNA synthesis is required for appropriate maturation of pre-60S particles and depends on the ATPase activity of NVL. Interacts with MPHOSPH6. Interacts with the RNA cap-binding complex proteins NCBP1 and SRRT. Interacts with NRDE2; the interaction is direct and negatively regulates MTREX function in exosomal degradation by changing its conformation precluding interaction with ZFC3H1, the RNA cap-binding complex proteins NCBP1 and SRRT, and association with the exosome. Associates with the RNA exosome complex.

It localises to the nucleus. Its subcellular location is the nucleoplasm. The protein resides in the nucleolus. The protein localises to the nucleus speckle. The catalysed reaction is ATP + H2O = ADP + phosphate + H(+). With respect to regulation, activated when MTREX is incorporated into NEXT complex an the nuclear RNA exosome complex. Functionally, catalyzes the ATP-dependent unwinding of RNA duplexes with a single-stranded 3' RNA extension. Central subunit of many protein complexes, namely TRAMP-like, nuclear exosome targeting (NEXT) and poly(A) tail exosome targeting (PAXT). NEXT functions as an RNA exosome cofactor that directs a subset of non-coding short-lived RNAs for exosomal degradation. NEXT is involved in surveillance and turnover of aberrant transcripts and non-coding RNAs. PAXT directs a subset of long and polyadenylated poly(A) RNAs for exosomal degradation. The RNA exosome is fundamental for the degradation of RNA in eukaryotic nuclei. Substrate targeting is facilitated by its cofactor ZCCHC8, which links to RNA-binding protein adapters. Associated with the RNA exosome complex and involved in the 3'-processing of the 7S pre-RNA to the mature 5.8S rRNA. May be involved in pre-mRNA splicing. In the context of NEXT complex can also in vitro unwind DNA:RNA heteroduplexes with a 3' poly (A) RNA tracking strand. Can promote unwinding and degradation of structured RNA substrates when associated with the nuclear exosome and its cofactors. Can displace a DNA strand while translocating on RNA to ultimately degrade the RNA within a DNA/RNA heteroduplex. Plays a role in DNA damage response. In Mus musculus (Mouse), this protein is Exosome RNA helicase MTR4.